The primary structure comprises 492 residues: Bifunctional purine biosynthesis protein PurH (492 aa).

The MGS-like domain maps to 1 to 144 (MKKAILSVSN…KNYKHVTTIV (144 aa)).

This sequence belongs to the PurH family.

The catalysed reaction is (6R)-10-formyltetrahydrofolate + 5-amino-1-(5-phospho-beta-D-ribosyl)imidazole-4-carboxamide = 5-formamido-1-(5-phospho-D-ribosyl)imidazole-4-carboxamide + (6S)-5,6,7,8-tetrahydrofolate. It carries out the reaction IMP + H2O = 5-formamido-1-(5-phospho-D-ribosyl)imidazole-4-carboxamide. It participates in purine metabolism; IMP biosynthesis via de novo pathway; 5-formamido-1-(5-phospho-D-ribosyl)imidazole-4-carboxamide from 5-amino-1-(5-phospho-D-ribosyl)imidazole-4-carboxamide (10-formyl THF route): step 1/1. Its pathway is purine metabolism; IMP biosynthesis via de novo pathway; IMP from 5-formamido-1-(5-phospho-D-ribosyl)imidazole-4-carboxamide: step 1/1. The polypeptide is Bifunctional purine biosynthesis protein PurH (Staphylococcus aureus (strain Newman)).